The sequence spans 296 residues: FNSNMLRGSVCEEDVSLMTSIDNMIEEIDFYEKEIYKGSHSGGVIKGMDYDLEDDENDEDEMTEQMVEEVADHITQDMIDEVAHHVLDNITHDMAHMEEIVHGLSGDVTQIKEIVQKVNVAVEKVKHIVETEETQKTVEPEQIEETQNTVEPEQTEETQKTVEPEQTEETQNTVEPEQIEETQKTVEPEQTEEAQKTVEPEQTEETQKTVEPEQTEETQKTVEPEQTEETQKTVEPEQTEETQKTVEPEQTEETQKTVEPEQTEETQKTVEPEQTEETQNTVEPEPTQETQNTVEP.

One copy of the 1; approximate repeat lies at 132–143; it reads EETQKTVEPEQI. Residues 132 to 296 form a 13.5 X 12 AA approximate tandem repeats of E-E-T-Q-K-T-V-E-P-E-Q-T region; the sequence is EETQKTVEPE…TQETQNTVEP (165 aa). The disordered stretch occupies residues 133 to 296; that stretch reads ETQKTVEPEQ…TQETQNTVEP (164 aa). The 2; approximate repeat unit spans residues 144–155; it reads EETQNTVEPEQT. Repeat 3 spans residues 156-167; the sequence is EETQKTVEPEQT. One copy of the 4; approximate repeat lies at 168-179; it reads EETQNTVEPEQI. Residues 180 to 191 form repeat 5; that stretch reads EETQKTVEPEQT. Positions 181–271 are enriched in basic and acidic residues; that stretch reads ETQKTVEPEQ…QTEETQKTVE (91 aa). Residues 192–203 form a 6; approximate repeat; that stretch reads EEAQKTVEPEQT. 6 consecutive repeat copies span residues 204-215, 216-227, 228-239, 240-251, 252-263, and 264-275. Residues 276–287 form a 13; approximate repeat; that stretch reads EETQNTVEPEPT. The segment covering 277 to 296 has biased composition (polar residues); sequence ETQNTVEPEPTQETQNTVEP. The stretch at 288 to 293 is one 14; truncated repeat; that stretch reads QETQNT.

In Plasmodium knowlesi, this protein is 110 kDa antigen.